The primary structure comprises 460 residues: Chromosomal replication initiator protein DnaA (460 aa).

The tract at residues 1-84 (MAVSLWQQCI…RFDIGSRPSA (84 aa)) is domain I, interacts with DnaA modulators. Residues 84-123 (AKKPEPAPVAAVRVPNPQTKASVGTSFNTTEPVANANHRS) are domain II. The interval 124-340 (NINPTYQFDN…GALNRVIANA (217 aa)) is domain III, AAA+ region. Positions 168, 170, 171, and 172 each coordinate ATP. The tract at residues 341–460 (NFTGRPITID…YANLIRTLSS (120 aa)) is domain IV, binds dsDNA.

This sequence belongs to the DnaA family. Oligomerizes as a right-handed, spiral filament on DNA at oriC.

Its subcellular location is the cytoplasm. In terms of biological role, plays an essential role in the initiation and regulation of chromosomal replication. ATP-DnaA binds to the origin of replication (oriC) to initiate formation of the DNA replication initiation complex once per cell cycle. Binds the DnaA box (a 9 base pair repeat at the origin) and separates the double-stranded (ds)DNA. Forms a right-handed helical filament on oriC DNA; dsDNA binds to the exterior of the filament while single-stranded (ss)DNA is stabiized in the filament's interior. The ATP-DnaA-oriC complex binds and stabilizes one strand of the AT-rich DNA unwinding element (DUE), permitting loading of DNA polymerase. After initiation quickly degrades to an ADP-DnaA complex that is not apt for DNA replication. Binds acidic phospholipids. The polypeptide is Chromosomal replication initiator protein DnaA (Shewanella sp. (strain ANA-3)).